Consider the following 299-residue polypeptide: Bifunctional protein FolD (299 aa).

Residues 168–170, S193, and I234 contribute to the NADP(+) site; that span reads GRS.

The protein belongs to the tetrahydrofolate dehydrogenase/cyclohydrolase family. As to quaternary structure, homodimer.

The catalysed reaction is (6R)-5,10-methylene-5,6,7,8-tetrahydrofolate + NADP(+) = (6R)-5,10-methenyltetrahydrofolate + NADPH. The enzyme catalyses (6R)-5,10-methenyltetrahydrofolate + H2O = (6R)-10-formyltetrahydrofolate + H(+). It functions in the pathway one-carbon metabolism; tetrahydrofolate interconversion. In terms of biological role, catalyzes the oxidation of 5,10-methylenetetrahydrofolate to 5,10-methenyltetrahydrofolate and then the hydrolysis of 5,10-methenyltetrahydrofolate to 10-formyltetrahydrofolate. The polypeptide is Bifunctional protein FolD (Agrobacterium fabrum (strain C58 / ATCC 33970) (Agrobacterium tumefaciens (strain C58))).